The following is a 1131-amino-acid chain: Phytochrome A (1131 aa).

The segment at 1–23 (MSSSRPAHSSSSSSRTRQSSRAR) is disordered. The 186-residue stretch at 219–404 (SMEALCNTVV…VFAVHVNKEF (186 aa)) folds into the GAF domain. Position 324 (cysteine 324) interacts with phytochromobilin. PAS domains follow at residues 620–690 (VTSE…LQGR) and 750–834 (VEGD…LAGE). Positions 904–1124 (YMRHAINKPL…TFILTAELAA (221 aa)) constitute a Histidine kinase domain.

This sequence belongs to the phytochrome family. Homodimer. Post-translationally, contains one covalently linked phytochromobilin chromophore.

In terms of biological role, regulatory photoreceptor which exists in two forms that are reversibly interconvertible by light: the Pr form that absorbs maximally in the red region of the spectrum and the Pfr form that absorbs maximally in the far-red region. Photoconversion of Pr to Pfr induces an array of morphogenic responses, whereas reconversion of Pfr to Pr cancels the induction of those responses. Pfr controls the expression of a number of nuclear genes including those encoding the small subunit of ribulose-bisphosphate carboxylase, chlorophyll A/B binding protein, protochlorophyllide reductase, rRNA, etc. It also controls the expression of its own gene(s) in a negative feedback fashion. The protein is Phytochrome A (PHYA1) of Zea mays (Maize).